We begin with the raw amino-acid sequence, 190 residues long: dTTP/UTP pyrophosphatase (190 aa).

Catalysis depends on aspartate 71, which acts as the Proton acceptor.

This sequence belongs to the Maf family. YhdE subfamily. A divalent metal cation serves as cofactor.

It localises to the cytoplasm. The enzyme catalyses dTTP + H2O = dTMP + diphosphate + H(+). It catalyses the reaction UTP + H2O = UMP + diphosphate + H(+). Its function is as follows. Nucleoside triphosphate pyrophosphatase that hydrolyzes dTTP and UTP. May have a dual role in cell division arrest and in preventing the incorporation of modified nucleotides into cellular nucleic acids. This Xanthomonas euvesicatoria pv. vesicatoria (strain 85-10) (Xanthomonas campestris pv. vesicatoria) protein is dTTP/UTP pyrophosphatase.